Consider the following 728-residue polypeptide: Beta-galactosidase 12 (728 aa).

Positions 1–27 (MGLNFREKAWILLGILCCSSLICSVKA) are cleaved as a signal peptide. Catalysis depends on Glu185, which acts as the Proton donor. The Nucleophile role is filled by Glu254. N-linked (GlcNAc...) asparagine glycans are attached at residues Asn255, Asn380, and Asn450.

Belongs to the glycosyl hydrolase 35 family. Ubiquitous, with higher expression levels in roots and siliques.

The protein resides in the secreted. The protein localises to the extracellular space. It is found in the apoplast. The enzyme catalyses Hydrolysis of terminal non-reducing beta-D-galactose residues in beta-D-galactosides.. This is Beta-galactosidase 12 (BGAL12) from Arabidopsis thaliana (Mouse-ear cress).